A 305-amino-acid chain; its full sequence is Glycine--tRNA ligase alpha subunit (305 aa).

Belongs to the class-II aminoacyl-tRNA synthetase family. Tetramer of two alpha and two beta subunits.

Its subcellular location is the cytoplasm. It catalyses the reaction tRNA(Gly) + glycine + ATP = glycyl-tRNA(Gly) + AMP + diphosphate. This is Glycine--tRNA ligase alpha subunit from Streptococcus pneumoniae (strain ATCC BAA-255 / R6).